The chain runs to 206 residues: MEITVKTLDGIEAGSVTLSDEIFGLEPRADILHRCVTWQLSRRQAGTHRTKGRSEINRTSKKMYKQKGTGNARHGAASAPQFRGGGRAFGPVVRSHAIDLPKKVRALALKHALSSKAKAAQIIVLDKVSLDDPKTKALKEHFAKLGLESVLIVDGAQVEQNVALAARNLPYVDVLPIQGINVYDILRRDTLVLTKAAVDALEARFK.

The protein belongs to the universal ribosomal protein uL4 family. In terms of assembly, part of the 50S ribosomal subunit.

Its function is as follows. One of the primary rRNA binding proteins, this protein initially binds near the 5'-end of the 23S rRNA. It is important during the early stages of 50S assembly. It makes multiple contacts with different domains of the 23S rRNA in the assembled 50S subunit and ribosome. Forms part of the polypeptide exit tunnel. The chain is Large ribosomal subunit protein uL4 from Xanthobacter autotrophicus (strain ATCC BAA-1158 / Py2).